A 525-amino-acid polypeptide reads, in one-letter code: Mitochondrial-processing peptidase subunit alpha (525 aa).

Residues 1–33 (MAAMVLAATRLLRGSGSWGRSRPRFGDPAYRRF) constitute a mitochondrion transit peptide. Lys64 bears the N6-succinyllysine mark. Lys299 is subject to N6-acetyllysine.

The protein belongs to the peptidase M16 family. In terms of assembly, heterodimer of PMPCA (alpha) and PMPCB (beta) subunits, forming the mitochondrial processing protease (MPP) in which PMPCA is involved in substrate recognition and binding and PMPCB is the catalytic subunit.

It localises to the mitochondrion matrix. The protein resides in the mitochondrion inner membrane. Its function is as follows. Substrate recognition and binding subunit of the essential mitochondrial processing protease (MPP), which cleaves the mitochondrial sequence off newly imported precursors proteins. The protein is Mitochondrial-processing peptidase subunit alpha (PMPCA) of Bos taurus (Bovine).